The primary structure comprises 589 residues: Intermediate filament protein B (589 aa).

A head region spans residues 1–84; it reads SLKQSQESSE…LEATDKEKKE (84 aa). The 353-residue stretch at 81–433 folds into the IF rod domain; the sequence is EKKEMQGLND…KMLEGEESRV (353 aa). Positions 85–116 are coil 1A; sequence MQGLNDRLGNYIDRVKKLEEQNRKLVADLDEL. A linker 1 region spans residues 117 to 130; it reads RGRWGKDTSEIKIQ. Positions 131-268 are coil 1B; sequence YSDSLRDARK…RVHEQEVKEL (138 aa). The linker 12 stretch occupies residues 269-285; sequence QALLAQAPADTREFFKN. The interval 286–433 is coil 2; it reads ELALAIRDIK…KMLEGEESRV (148 aa). The tract at residues 434-589 is tail; that stretch reads GLRQMVEQVV…HTQKTIQTGQ (156 aa). Residues 446 to 470 form a disordered region; it reads HSLQQQEDTDSTRNVRGEVSTKTTF. The LTD domain maps to 466–584; that stretch reads TKTTFQRSAK…DERATHTQKT (119 aa).

The protein belongs to the intermediate filament family. In terms of assembly, a and B can form homopolymers. In terms of tissue distribution, giant body muscle cells.

The protein resides in the cytoplasm. The sequence is that of Intermediate filament protein B from Ascaris suum (Pig roundworm).